Reading from the N-terminus, the 131-residue chain is Small ribosomal subunit protein uS8 (131 aa).

It belongs to the universal ribosomal protein uS8 family. Part of the 30S ribosomal subunit. Contacts proteins S5 and S12.

Functionally, one of the primary rRNA binding proteins, it binds directly to 16S rRNA central domain where it helps coordinate assembly of the platform of the 30S subunit. The sequence is that of Small ribosomal subunit protein uS8 from Variovorax paradoxus (strain S110).